We begin with the raw amino-acid sequence, 108 residues long: Small ribosomal subunit protein uS17 (108 aa).

It belongs to the universal ribosomal protein uS17 family. Part of the 30S ribosomal subunit.

Functionally, one of the primary rRNA binding proteins, it binds specifically to the 5'-end of 16S ribosomal RNA. This chain is Small ribosomal subunit protein uS17, found in Methanoculleus marisnigri (strain ATCC 35101 / DSM 1498 / JR1).